Reading from the N-terminus, the 1429-residue chain is Probable ATP-dependent RNA helicase spindle-E (1429 aa).

The Helicase ATP-binding domain occupies 121–288 (VNAINTHQVV…FSTKVSVPPV (168 aa)). Position 134 to 141 (134 to 141 (GETGCGKT)) interacts with ATP. A DEAH box motif is present at residues 234–237 (DEVH). Positions 349 to 521 (QSEQSYDDAK…NSVLKAKLLD (173 aa)) constitute a Helicase C-terminal domain. The 64-residue stretch at 933–996 (AGVLTKGMMV…RLMTKELLSQ (64 aa)) folds into the Tudor domain.

Belongs to the DEAD box helicase family. DEAH subfamily.

Its subcellular location is the cytoplasm. The enzyme catalyses ATP + H2O = ADP + phosphate + H(+). Probable ATP-binding RNA helicase which plays a central role during spermatogenesis and oogenesis by repressing transposable elements and preventing their mobilization, which is essential for the germline integrity. Acts via the piRNA metabolic process, which mediates the repression of transposable elements during meiosis by forming complexes composed of piRNAs and Piwi and govern the methylation and subsequent repression of transposons. Involved in the repression of LTR retrotransposon copia. Also involved in telomere regulation by repressing specialized telomeric retroelements HeT-A, TAHRE, and TART; Drosophila telomeres being maintained by transposition of specialized telomeric retroelements. Involved in telomeric trans-silencing, a repression mechanism by which a transposon or a transgene inserted in subtelomeric heterochromatin has the capacity to repress in trans in the female germline, a homologous transposon, or transgene located in euchromatin. Involved in the repression of testis-expressed Stellate genes by the homologous Su(Ste) repeats. Required for anteroposterior and dorsoventral axis formation during oogenesis. This chain is Probable ATP-dependent RNA helicase spindle-E (spn-E), found in Drosophila ananassae (Fruit fly).